A 146-amino-acid polypeptide reads, in one-letter code: MADPEKLFRVDVVTPNGMIYSHRGSIVDVRAIDGERSIMYNHVPLLTPLVISEVKVKRSREMDSRIDHIAISGGYIEFSNNVATIIADSAERARNIDISRAQAAKERAEKRLKEAREKHDERTLERAEVALRRAMNRISVYNTKGH.

Belongs to the ATPase epsilon chain family. F-type ATPases have 2 components, CF(1) - the catalytic core - and CF(0) - the membrane proton channel. CF(1) has five subunits: alpha(3), beta(3), gamma(1), delta(1), epsilon(1). CF(0) has three main subunits: a, b and c.

It localises to the cell membrane. In terms of biological role, produces ATP from ADP in the presence of a proton gradient across the membrane. This Lactobacillus helveticus (strain DPC 4571) protein is ATP synthase epsilon chain.